The following is a 166-amino-acid chain: Phosphopantetheine adenylyltransferase (166 aa).

S11 lines the substrate pocket. ATP-binding positions include 11 to 12 and H19; that span reads SF. 3 residues coordinate substrate: K43, A76, and R90. Residues 91–93, E101, and 126–132 each bind ATP; these read GLR and LQPISSS.

Belongs to the bacterial CoaD family. In terms of assembly, homohexamer. The cofactor is Mg(2+).

The protein resides in the cytoplasm. It catalyses the reaction (R)-4'-phosphopantetheine + ATP + H(+) = 3'-dephospho-CoA + diphosphate. The protein operates within cofactor biosynthesis; coenzyme A biosynthesis; CoA from (R)-pantothenate: step 4/5. Reversibly transfers an adenylyl group from ATP to 4'-phosphopantetheine, yielding dephospho-CoA (dPCoA) and pyrophosphate. The sequence is that of Phosphopantetheine adenylyltransferase from Streptococcus equi subsp. zooepidemicus (strain MGCS10565).